The chain runs to 112 residues: Thyroid transcription factor 1 (112 aa).

Residues 1-60 constitute a DNA-binding region (homeobox); it reads RRNRRVLFSQAQVYELERRFKQQKYLSAPEREHLASMIHLTPTQVKIWFQNHRYKMKRQA. The segment at 59-100 is disordered; that stretch reads QAKDKAAQQQLQQDSGGGGGGGGAGCPQQQQAQQQSPRRVAV. Over residues 73 to 83 the composition is skewed to gly residues; that stretch reads SGGGGGGGGAG. The span at 84-93 shows a compositional bias: low complexity; sequence CPQQQQAQQQ.

It belongs to the NK-2 homeobox family. Post-translationally, phosphorylated on serine residues.

The protein resides in the nucleus. Functionally, transcription factor that binds and activates the promoter of thyroid specific genes such as thyroglobulin, thyroperoxidase, and thyrotropin receptor. Crucial in the maintenance of the thyroid differentiation phenotype. May play a role in lung development and surfactant homeostasis. This Cavia porcellus (Guinea pig) protein is Thyroid transcription factor 1 (TITF1).